The chain runs to 130 residues: Small ribosomal subunit protein uS9 (130 aa).

This sequence belongs to the universal ribosomal protein uS9 family.

The protein is Small ribosomal subunit protein uS9 of Xanthomonas axonopodis pv. citri (strain 306).